A 206-amino-acid polypeptide reads, in one-letter code: MKTFKFLTALFATAILTACTLDMERPTNVQYIDKTDAIWQQHLQKIQKIQSYQAKGQIGYISPTERFSSRFEWQYQNPKSYTLKLYSLISKSTLLIQMHQSGMTISDNNGNQQSAANAKLLLQEIIGMDVPLEHLAYWLKGQPAMNADYQVGTNHLLGAFTYHVDGSQWTADYLTYHSNNSMPENILLKNDSTKQTLKIRVDEWIY.

The signal sequence occupies residues 1 to 18; the sequence is MKTFKFLTALFATAILTA. A lipid anchor (N-palmitoyl cysteine) is attached at C19. C19 is lipidated: S-diacylglycerol cysteine.

The protein belongs to the LolB family. As to quaternary structure, monomer.

The protein resides in the cell outer membrane. In terms of biological role, plays a critical role in the incorporation of lipoproteins in the outer membrane after they are released by the LolA protein. The polypeptide is Outer-membrane lipoprotein LolB (Haemophilus influenzae (strain PittEE)).